Here is a 159-residue protein sequence, read N- to C-terminus: S-ribosylhomocysteine lyase (159 aa).

Histidine 53, histidine 57, and cysteine 124 together coordinate Fe cation.

It belongs to the LuxS family. In terms of assembly, homodimer. Fe cation serves as cofactor.

The catalysed reaction is S-(5-deoxy-D-ribos-5-yl)-L-homocysteine = (S)-4,5-dihydroxypentane-2,3-dione + L-homocysteine. Involved in the synthesis of autoinducer 2 (AI-2) which is secreted by bacteria and is used to communicate both the cell density and the metabolic potential of the environment. The regulation of gene expression in response to changes in cell density is called quorum sensing. Catalyzes the transformation of S-ribosylhomocysteine (RHC) to homocysteine (HC) and 4,5-dihydroxy-2,3-pentadione (DPD). The polypeptide is S-ribosylhomocysteine lyase (Desulfotalea psychrophila (strain LSv54 / DSM 12343)).